The chain runs to 89 residues: Small ribosomal subunit protein uS14A (89 aa).

Belongs to the universal ribosomal protein uS14 family. In terms of assembly, part of the 30S ribosomal subunit. Contacts proteins S3 and S10.

Functionally, binds 16S rRNA, required for the assembly of 30S particles and may also be responsible for determining the conformation of the 16S rRNA at the A site. This is Small ribosomal subunit protein uS14A from Staphylococcus saprophyticus subsp. saprophyticus (strain ATCC 15305 / DSM 20229 / NCIMB 8711 / NCTC 7292 / S-41).